An 833-amino-acid chain; its full sequence is DNA ligase (833 aa).

Residues 35–39 (DVEYD), 84–85 (SL), and Glu115 contribute to the NAD(+) site. Residue Lys117 is the N6-AMP-lysine intermediate of the active site. Arg138, Glu175, Lys292, and Lys316 together coordinate NAD(+). Cys410, Cys413, Cys428, and Cys434 together coordinate Zn(2+). The 84-residue stretch at 750–833 (VQAGPLDGQT…AFLSEHGQAV (84 aa)) folds into the BRCT domain.

This sequence belongs to the NAD-dependent DNA ligase family. LigA subfamily. Mg(2+) is required as a cofactor. It depends on Mn(2+) as a cofactor.

The enzyme catalyses NAD(+) + (deoxyribonucleotide)n-3'-hydroxyl + 5'-phospho-(deoxyribonucleotide)m = (deoxyribonucleotide)n+m + AMP + beta-nicotinamide D-nucleotide.. Its function is as follows. DNA ligase that catalyzes the formation of phosphodiester linkages between 5'-phosphoryl and 3'-hydroxyl groups in double-stranded DNA using NAD as a coenzyme and as the energy source for the reaction. It is essential for DNA replication and repair of damaged DNA. The sequence is that of DNA ligase from Xanthomonas campestris pv. campestris (strain 8004).